The chain runs to 120 residues: Large ribosomal subunit protein bL19 (120 aa).

This sequence belongs to the bacterial ribosomal protein bL19 family.

Its function is as follows. This protein is located at the 30S-50S ribosomal subunit interface and may play a role in the structure and function of the aminoacyl-tRNA binding site. This is Large ribosomal subunit protein bL19 from Acaryochloris marina (strain MBIC 11017).